Consider the following 512-residue polypeptide: Matrix metalloproteinase-27 (512 aa).

Residues 1–17 (MKSFLLLFLLFVTFSSA) form the signal peptide. The propeptide at 18–98 (LPADQKMENE…PRCGVPDVGQ (81 aa)) is activation peptide. A Cysteine switch motif is present at residues 89–96 (PRCGVPDV). Cys91 lines the Zn(2+) pocket. A glycan (N-linked (GlcNAc...) asparagine) is linked at Asn110. The Ca(2+) site is built by Asp121 and Asp155. His165 contacts Zn(2+). Ca(2+) contacts are provided by Asp173, Gly174, and Val178. His181 contacts Zn(2+). Ca(2+) is bound by residues Gly188 and Asp192. His194 serves as a coordination point for Zn(2+). Residues Asp196 and Glu199 each coordinate Ca(2+). His216 is a Zn(2+) binding site. Residue Glu217 is part of the active site. Zn(2+) contacts are provided by His220 and His226. Hemopexin repeat units lie at residues 276 to 325 (PHAC…WPSL), 326 to 371 (PADL…GFPR), 373 to 421 (VKKI…FPGI), and 422 to 465 (GLRV…WFQC). Cys279 and Cys465 form a disulfide bridge. Residue Asp286 participates in Ca(2+) binding. Ca(2+)-binding residues include Asp377 and Asp426. A required for retention in the endoplasmic reticulum region spans residues 466–512 (KEPLNSSLDFHFNQEKAYSGEVETLHHQSLSLLIFGIVHLLNKICSY).

This sequence belongs to the peptidase M10A family. Ca(2+) serves as cofactor. It depends on Zn(2+) as a cofactor. Post-translationally, N-glycosylated.

It is found in the endoplasmic reticulum. Functionally, matrix metalloproteinases degrade protein components of the extracellular matrix such as fibronectin, laminin, gelatins and/or collagens. This chain is Matrix metalloproteinase-27 (MMP27), found in Tupaia belangeri (Common tree shrew).